An 806-amino-acid chain; its full sequence is Leucine--tRNA ligase (806 aa).

The 'HIGH' region motif lies at Pro-40–His-51. Residues Lys-576–Ser-580 carry the 'KMSKS' region motif. An ATP-binding site is contributed by Lys-579.

It belongs to the class-I aminoacyl-tRNA synthetase family.

The protein resides in the cytoplasm. It carries out the reaction tRNA(Leu) + L-leucine + ATP = L-leucyl-tRNA(Leu) + AMP + diphosphate. This chain is Leucine--tRNA ligase, found in Halalkalibacterium halodurans (strain ATCC BAA-125 / DSM 18197 / FERM 7344 / JCM 9153 / C-125) (Bacillus halodurans).